We begin with the raw amino-acid sequence, 836 residues long: Serine/threonine-protein kinase ppk5 (836 aa).

Disordered regions lie at residues 1-29, 192-214, 230-307, and 328-381; these read MVGL…FLSP, INQL…TLSS, CSQF…YKSI, and TPLD…ERQN. Polar residues-rich tracts occupy residues 192 to 205, 232 to 241, and 265 to 288; these read INQL…TNYP, QFASPRSSIV, and KPSN…TKLT. Over residues 289–298 the composition is skewed to basic and acidic residues; it reads SQRDNDHQKD. Positions 338-347 are enriched in basic residues; sequence SGKKFNKNSK. Positions 353 to 362 are enriched in low complexity; the sequence is STISSYSSAS. The 297-residue stretch at 518–814 folds into the Protein kinase domain; it reads YEIIDTVGKG…VDSALQHEFI (297 aa). Residues 524 to 532 and lysine 547 contribute to the ATP site; that span reads VGKGSFGQV. Catalysis depends on aspartate 644, which acts as the Proton acceptor. Phosphotyrosine is present on tyrosine 678.

This sequence belongs to the protein kinase superfamily. CMGC Ser/Thr protein kinase family. MNB/DYRK subfamily.

It localises to the cytoplasm. The enzyme catalyses L-seryl-[protein] + ATP = O-phospho-L-seryl-[protein] + ADP + H(+). It carries out the reaction L-threonyl-[protein] + ATP = O-phospho-L-threonyl-[protein] + ADP + H(+). Has a role in meiosis. The chain is Serine/threonine-protein kinase ppk5 (ppk5) from Schizosaccharomyces pombe (strain 972 / ATCC 24843) (Fission yeast).